A 197-amino-acid chain; its full sequence is Imidazoleglycerol-phosphate dehydratase (197 aa).

This sequence belongs to the imidazoleglycerol-phosphate dehydratase family.

It is found in the cytoplasm. The catalysed reaction is D-erythro-1-(imidazol-4-yl)glycerol 3-phosphate = 3-(imidazol-4-yl)-2-oxopropyl phosphate + H2O. It functions in the pathway amino-acid biosynthesis; L-histidine biosynthesis; L-histidine from 5-phospho-alpha-D-ribose 1-diphosphate: step 6/9. This chain is Imidazoleglycerol-phosphate dehydratase, found in Pseudomonas aeruginosa (strain LESB58).